The chain runs to 284 residues: RNase adapter protein RapZ (284 aa).

8 to 15 (GRSGSGKS) contacts ATP. A GTP-binding site is contributed by 56–59 (DVRN). Residues 266-284 (RSRGKNVQSRHRTLEKRKS) form an RNA-binding region.

Belongs to the RapZ-like family. RapZ subfamily. Homotrimer.

Its function is as follows. Modulates the synthesis of GlmS, by affecting the processing and stability of the regulatory small RNA GlmZ. When glucosamine-6-phosphate (GlcN6P) concentrations are high in the cell, RapZ binds GlmZ and targets it to cleavage by RNase E. Consequently, GlmZ is inactivated and unable to activate GlmS synthesis. Under low GlcN6P concentrations, RapZ is sequestered and inactivated by an other regulatory small RNA, GlmY, preventing GlmZ degradation and leading to synthesis of GlmS. The chain is RNase adapter protein RapZ from Klebsiella pneumoniae (strain 342).